The following is a 904-amino-acid chain: Toll-like receptor 3 (904 aa).

Residues 1-26 (MSRPLPYHIHFFSGLLTCWILCTSSA) form the signal peptide. An LRRNT domain is found at 27–52 (HKCTVRHEVADCSHLKLTQIPDDLPT). Topologically, residues 27-705 (HKCTVRHEVA…PCKDSAPFEL (679 aa)) are lumenal. Residues Cys-29 and Cys-38 are joined by a disulfide bond. Asn-53, Asn-58, and Asn-71 each carry an N-linked (GlcNAc...) asparagine glycan. 6 LRR repeats span residues 53–74 (NITV…NFTR), 77–98 (QLTT…LCQS), 101–122 (WLEI…TFIF), 125–146 (NLTE…PFKN), 149–170 (NLIK…TQLQ), and 173–194 (NLQE…EFDF). Residues Cys-96 and Cys-123 are joined by a disulfide bond. Residue Asn-125 is glycosylated (N-linked (GlcNAc...) asparagine). N-linked (GlcNAc...) asparagine glycosylation occurs at Asn-197. LRR repeat units follow at residues 199 to 220 (SLKR…CFHT) and 223 to 245 (ELSG…LCLE). 4 N-linked (GlcNAc...) asparagine glycosylation sites follow: Asn-248, Asn-253, Asn-276, and Asn-292. 14 LRR repeats span residues 250–271 (SIEN…TFDG), 276–297 (NLTT…SFAW), 300–321 (HLEY…SFYG), 324–345 (NLRR…TSLP), 357–378 (CLEY…TFTG), 381–401 (RLKF…TNET), 409–430 (PLLL…AFSW), 433–455 (HLEV…EWRG), 466–487 (YNKY…QRLM), 508–529 (NLVI…LLKG), 532–553 (KLEI…ANPG), 564–585 (HLHI…AFKD), 588–609 (ELKS…VFDN), and 612–633 (SLKS…VFGP). Asn-399 is a glycosylation site (N-linked (GlcNAc...) asparagine). N-linked (GlcNAc...) asparagine glycans are attached at residues Asn-637, Asn-663, and Asn-668. The region spanning 646–699 (NPFDCTCESIAWFVNWINITHTNISELSNHYLCNTPPQYHGYPVMLFDVSPCKD) is the LRRCT domain. Disulfide bonds link Cys-650–Cys-678 and Cys-652–Cys-697. Residues 706 to 726 (LFMININILLIFIFIVLLIHF) traverse the membrane as a helical segment. Over 727-904 (EGWRISFYWN…VALGSRNSAH (178 aa)) the chain is Cytoplasmic. The region spanning 754–897 (FEYAAYIIHA…AFHHKLKVAL (144 aa)) is the TIR domain. A Phosphotyrosine modification is found at Tyr-759. Glycyl lysine isopeptide (Lys-Gly) (interchain with G-Cter in ubiquitin) cross-links involve residues Lys-765, Lys-812, and Lys-831. The residue at position 858 (Tyr-858) is a Phosphotyrosine.

It belongs to the Toll-like receptor family. As to quaternary structure, monomer and homodimer; dimerization is triggered by ligand-binding, the signaling unit is composed of one ds-RNA of around 40 bp and two TLR3 molecules, and lateral clustering of signaling units along the length of the ds-RNA ligand is required for TLR3 signal transduction. Interacts (via transmembrane domain) with UNC93B1; the interaction is required for transport from the ER to the endosomes. Interacts with TICAM1 (via the TIR domain) in response to poly(I:C) and this interaction is enhanced in the presence of WDFY1. Interacts with SRC; upon binding of double-stranded RNA. The tyrosine-phosphorylated form (via TIR domain) interacts with WDFY1 (via WD repeat 2) in response to poly(I:C). Post-translationally, TLR3 signaling requires a proteolytic cleavage mediated by cathepsins CTSB and CTSH, the cleavage occurs between amino acids 252 and 346. The cleaved form of TLR3 is the predominant form found in endosomes. In terms of processing, ubiquitinated by TRIM3; leading to recognition and sorting of polyubiquitinated TLR3 by the ESCRT complexes. Ubiquitinated by ZNRF1 via 'Lys-63'-linked ubiquitin chains; leading to TLR3 lysosomal trafficking and degradation. Ubiquitinated by RNF170 at Lys-765 via 'Lys-48'-linked ubiquitin chains; leading to TLR3 proteasomal degradation.

Its subcellular location is the endoplasmic reticulum membrane. It localises to the endosome membrane. The protein resides in the early endosome. Functionally, key component of innate and adaptive immunity. TLRs (Toll-like receptors) control host immune response against pathogens through recognition of molecular patterns specific to microorganisms. TLR3 is a nucleotide-sensing TLR which is activated by double-stranded RNA, a sign of viral infection. Acts via the adapter TRIF/TICAM1, leading to NF-kappa-B activation, IRF3 nuclear translocation, cytokine secretion and the inflammatory response. This chain is Toll-like receptor 3 (TLR3), found in Bos taurus (Bovine).